We begin with the raw amino-acid sequence, 270 residues long: NAD kinase (270 aa).

Asp-49 serves as the catalytic Proton acceptor. Residues 49-50, Arg-54, 126-127, Arg-152, Asp-154, 165-170, Ala-189, and Gln-227 each bind NAD(+); these read DG, NE, and TAYNKS.

It belongs to the NAD kinase family. It depends on a divalent metal cation as a cofactor.

Its subcellular location is the cytoplasm. It carries out the reaction NAD(+) + ATP = ADP + NADP(+) + H(+). In terms of biological role, involved in the regulation of the intracellular balance of NAD and NADP, and is a key enzyme in the biosynthesis of NADP. Catalyzes specifically the phosphorylation on 2'-hydroxyl of the adenosine moiety of NAD to yield NADP. In Lactococcus lactis subsp. lactis (strain IL1403) (Streptococcus lactis), this protein is NAD kinase.